A 205-amino-acid chain; its full sequence is High frequency lysogenization protein HflD homolog (205 aa).

The protein belongs to the HflD family.

It is found in the cytoplasm. Its subcellular location is the cell inner membrane. The chain is High frequency lysogenization protein HflD homolog from Vibrio campbellii (strain ATCC BAA-1116).